Reading from the N-terminus, the 464-residue chain is Ubiquinone biosynthesis monooxygenase COQ6, mitochondrial (464 aa).

Residues M1–L24 constitute a mitochondrion transit peptide.

It belongs to the UbiH/COQ6 family. Component of a multi-subunit COQ enzyme complex, composed of at least coq3, coq4, coq5, coq6, coq7 and coq9. Interacts with coq8b and coq7. Requires FAD as cofactor.

It is found in the mitochondrion inner membrane. Its subcellular location is the golgi apparatus. It localises to the cell projection. It catalyses the reaction a 4-hydroxy-3-(all-trans-polyprenyl)benzoate + 2 reduced [2Fe-2S]-[ferredoxin] + O2 + 2 H(+) = a 3,4-dihydroxy-5-(all-trans-polyprenyl)benzoate + 2 oxidized [2Fe-2S]-[ferredoxin] + H2O. The enzyme catalyses a 2-methoxy-6-(all-trans-polyprenyl)phenol + 2 reduced [2Fe-2S]-[ferredoxin] + O2 + 2 H(+) = a 2-methoxy-6-(all-trans-polyprenyl)benzene-1,4-diol + 2 oxidized [2Fe-2S]-[ferredoxin] + H2O. It functions in the pathway cofactor biosynthesis; ubiquinone biosynthesis. In terms of biological role, FAD-dependent monooxygenase required for two non-consecutive steps during ubiquinone biosynthesis. Required for the C5-ring hydroxylation during ubiquinone biosynthesis by catalyzing the hydroxylation of 4-hydroxy-3-(all-trans-polyprenyl)benzoic acid to 3,4-dihydroxy-5-(all-trans-polyprenyl)benzoic acid. Also acts downstream of coq4, for the C1-hydroxylation during ubiquinone biosynthesis by catalyzing the hydroxylation of 2-methoxy-6-(all-trans-polyprenyl)phenol to 2-methoxy-6-(all-trans-polyprenyl)benzene-1,4-diol. The electrons required for the hydroxylation reaction are funneled indirectly to coq6 from NADPH via a ferredoxin/ferredoxin reductase system. The polypeptide is Ubiquinone biosynthesis monooxygenase COQ6, mitochondrial (Xenopus tropicalis (Western clawed frog)).